Here is a 299-residue protein sequence, read N- to C-terminus: Prohibitin-2 (299 aa).

Residue alanine 2 is modified to N-acetylalanine. Residues 19–49 (MGTALKLLLGAGAVAYGVRESVFTVEGGHRA) form a necessary for transcriptional repression region. Tyrosine 128 carries the post-translational modification Phosphotyrosine. Lysine 147 bears the N6-acetyllysine mark. The tract at residues 150–174 (ASQLITQRAQVSLLIRRELTERAKD) is necessary for transcriptional repression. Serine 151 is modified (phosphoserine). Positions 190-238 (SREYTAAVEAKQVAQQEAQRAQFLVEKAKQEQRQKIVQAEGEAEAAKML) form a coiled coil. N6-acetyllysine is present on residues lysine 200, lysine 236, lysine 250, and lysine 262.

This sequence belongs to the prohibitin family. As to quaternary structure, the mitochondrial prohibitin complex consists of two subunits (PHB1 and PHB2), assembled into a membrane-associated ring-shaped supercomplex of approximately 1 mDa. Interacts with ESR1, HDAC1 and HDAC5. Interacts with ZNF703. Interacts with STOML2. Interacts with ARFGEF3. Interacts with SPHK2. Interacts with COX4I1; the interaction associates PHB2 with COX. Interacts with MAP1LC3B (membrane-bound form LC3-II); the interaction is direct and upon mitochondrial depolarization and proteasome-dependent outer membrane rupture. Interacts with IGFBP6 (via C-terminal domain). Interacts with CLPB. Interacts with CD86 (via cytoplasmic domain); the interactions increases after priming with CD40. Interacts with AFG3L2. Interacts with DNAJC19. Interacts with AKT2; this interaction may be important for myogenic differentiation. In terms of processing, phosphorylated. Tyrosine phosphorylation is indirectly stimulated by IGFBP6. Widely expressed in different tissues.

It localises to the mitochondrion inner membrane. The protein localises to the cytoplasm. It is found in the nucleus. Its subcellular location is the cell membrane. In terms of biological role, protein with pleiotropic attributes mediated in a cell-compartment- and tissue-specific manner, which include the plasma membrane-associated cell signaling functions, mitochondrial chaperone, and transcriptional co-regulator of transcription factors and sex steroid hormones in the nucleus. Functionally, in the mitochondria, together with PHB, forms large ring complexes (prohibitin complexes) in the inner mitochondrial membrane (IMM) and functions as a chaperone protein that stabilizes mitochondrial respiratory enzymes and maintains mitochondrial integrity in the IMM, which is required for mitochondrial morphogenesis, neuronal survival, and normal lifespan. The prohibitin complex, with DNAJC19, regulates cardiolipin remodeling and the protein turnover of OMA1 in a cardiolipin-binding manner. Also regulates cytochrome-c oxidase assembly (COX) and mitochondrial respiration. Binding to sphingoid 1-phosphate (SPP) modulates its regulator activity. Has a key role of mitophagy receptor involved in targeting mitochondria for autophagic degradation. Involved in mitochondrial-mediated antiviral innate immunity, activates RIG-I-mediated signal transduction and production of IFNB1 and pro-inflammatory cytokine IL6. Its function is as follows. In the nucleus, serves as transcriptional co-regulator. Acts as a mediator of transcriptional repression by nuclear hormone receptors via recruitment of histone deacetylases. Functions as an estrogen receptor (ER)-selective coregulator that potentiates the inhibitory activities of antiestrogens and represses the activity of estrogens. Competes with NCOA1 for modulation of ER transcriptional activity. In the plasma membrane, is involved in IGFBP6-induced cell migration. Cooperates with CD86 to mediate CD86-signaling in B lymphocytes that regulates the level of IgG1 produced through the activation of distal signaling intermediates. Upon CD40 engagement, required to activate NF-kappa-B signaling pathway via phospholipase C and protein kinase C activation. This is Prohibitin-2 from Mus musculus (Mouse).